A 466-amino-acid polypeptide reads, in one-letter code: Ribulose bisphosphate carboxylase large chain (466 aa).

Lys4 is subject to N6,N6,N6-trimethyllysine. 2 residues coordinate substrate: Asn113 and Thr163. Lys165 (proton acceptor) is an active-site residue. Lys167 contributes to the substrate binding site. The Mg(2+) site is built by Lys191, Asp193, and Glu194. Lys191 carries the N6-carboxylysine modification. His284 (proton acceptor) is an active-site residue. Substrate-binding residues include Arg285, His317, and Ser369.

Belongs to the RuBisCO large chain family. Type I subfamily. In terms of assembly, heterohexadecamer of 8 large chains and 8 small chains; disulfide-linked. The disulfide link is formed within the large subunit homodimers. It depends on Mg(2+) as a cofactor. In terms of processing, the disulfide bond which can form in the large chain dimeric partners within the hexadecamer appears to be associated with oxidative stress and protein turnover.

Its subcellular location is the plastid. The protein resides in the chloroplast. The enzyme catalyses 2 (2R)-3-phosphoglycerate + 2 H(+) = D-ribulose 1,5-bisphosphate + CO2 + H2O. The catalysed reaction is D-ribulose 1,5-bisphosphate + O2 = 2-phosphoglycolate + (2R)-3-phosphoglycerate + 2 H(+). In terms of biological role, ruBisCO catalyzes two reactions: the carboxylation of D-ribulose 1,5-bisphosphate, the primary event in carbon dioxide fixation, as well as the oxidative fragmentation of the pentose substrate in the photorespiration process. Both reactions occur simultaneously and in competition at the same active site. This is Ribulose bisphosphate carboxylase large chain from Ruttya fruticosa (African azalea).